A 356-amino-acid chain; its full sequence is Putative mitogen-activated protein kinase 14C (356 aa).

One can recognise a Protein kinase domain in the interval 20–305; it reads YEFVRFLGGG…AAEAMLHPYL (286 aa). ATP is bound by residues 26–34 and Lys-49; that span reads LGGGSFGQV. The active-site Proton acceptor is the Asp-147. At Thr-177 the chain carries Phosphothreonine.

The protein belongs to the protein kinase superfamily. CMGC Ser/Thr protein kinase family. MAP kinase subfamily. Mg(2+) serves as cofactor. The phosphorylation on Thr-177 activates the enzyme. A conserved Tyr, which must also be phosphorylated to activate the enzyme in closely related sequences, is replaced by His-179 in this sequence.

The catalysed reaction is L-seryl-[protein] + ATP = O-phospho-L-seryl-[protein] + ADP + H(+). It catalyses the reaction L-threonyl-[protein] + ATP = O-phospho-L-threonyl-[protein] + ADP + H(+). Kinase involved in a signal transduction pathway. The protein is Putative mitogen-activated protein kinase 14C (p38c) of Drosophila melanogaster (Fruit fly).